A 251-amino-acid chain; its full sequence is Maleate isomerase (251 aa).

Residues Asn14, 76–78 (CLV), Tyr133, and Asn163 each bind substrate. The active-site Nucleophile is the Cys76. Position 76 is an S-(2-succinyl)cysteine (Cys76). The active-site Proton donor is Cys194. A substrate-binding site is contributed by 195 to 196 (VQ).

It belongs to the maleate isomerase family. In terms of assembly, homodimer.

It carries out the reaction maleate = fumarate. In terms of biological role, catalyzes cis-trans isomerization of the C2-C3 double bond in maleate to yield fumarate. Shows a strict specificity for maleate, with no activity detected toward structurally related substrates including citraconate, mesaconate, dimethylmaleate, and maleamide. This chain is Maleate isomerase, found in Nocardia farcinica (strain IFM 10152).